Here is a 410-residue protein sequence, read N- to C-terminus: Multifunctional CCA protein (410 aa).

2 residues coordinate ATP: G8 and R11. G8 and R11 together coordinate CTP. 2 residues coordinate Mg(2+): D21 and D23. Residues R91, R138, and R141 each contribute to the ATP site. CTP-binding residues include R91, R138, and R141. The 119-residue stretch at 229-347 (TGIHQEMVSD…AQLALVCEAD (119 aa)) folds into the HD domain.

The protein belongs to the tRNA nucleotidyltransferase/poly(A) polymerase family. Bacterial CCA-adding enzyme type 1 subfamily. In terms of assembly, monomer. Can also form homodimers and oligomers. Mg(2+) serves as cofactor. It depends on Ni(2+) as a cofactor.

The enzyme catalyses a tRNA precursor + 2 CTP + ATP = a tRNA with a 3' CCA end + 3 diphosphate. It carries out the reaction a tRNA with a 3' CCA end + 2 CTP + ATP = a tRNA with a 3' CCACCA end + 3 diphosphate. Catalyzes the addition and repair of the essential 3'-terminal CCA sequence in tRNAs without using a nucleic acid template. Adds these three nucleotides in the order of C, C, and A to the tRNA nucleotide-73, using CTP and ATP as substrates and producing inorganic pyrophosphate. tRNA 3'-terminal CCA addition is required both for tRNA processing and repair. Also involved in tRNA surveillance by mediating tandem CCA addition to generate a CCACCA at the 3' terminus of unstable tRNAs. While stable tRNAs receive only 3'-terminal CCA, unstable tRNAs are marked with CCACCA and rapidly degraded. The protein is Multifunctional CCA protein of Xanthomonas euvesicatoria pv. vesicatoria (strain 85-10) (Xanthomonas campestris pv. vesicatoria).